A 484-amino-acid chain; its full sequence is Glutamyl-tRNA(Gln) amidotransferase subunit A (484 aa).

Catalysis depends on charge relay system residues lysine 76 and serine 151. The Acyl-ester intermediate role is filled by serine 175.

It belongs to the amidase family. GatA subfamily. In terms of assembly, heterotrimer of A, B and C subunits.

It catalyses the reaction L-glutamyl-tRNA(Gln) + L-glutamine + ATP + H2O = L-glutaminyl-tRNA(Gln) + L-glutamate + ADP + phosphate + H(+). Allows the formation of correctly charged Gln-tRNA(Gln) through the transamidation of misacylated Glu-tRNA(Gln) in organisms which lack glutaminyl-tRNA synthetase. The reaction takes place in the presence of glutamine and ATP through an activated gamma-phospho-Glu-tRNA(Gln). This chain is Glutamyl-tRNA(Gln) amidotransferase subunit A, found in Alkalilimnicola ehrlichii (strain ATCC BAA-1101 / DSM 17681 / MLHE-1).